A 238-amino-acid chain; its full sequence is Ribonuclease PH (238 aa).

Phosphate is bound by residues R86 and 124–126; that span reads GTR.

It belongs to the RNase PH family. In terms of assembly, homohexameric ring arranged as a trimer of dimers.

The enzyme catalyses tRNA(n+1) + phosphate = tRNA(n) + a ribonucleoside 5'-diphosphate. Functionally, phosphorolytic 3'-5' exoribonuclease that plays an important role in tRNA 3'-end maturation. Removes nucleotide residues following the 3'-CCA terminus of tRNAs; can also add nucleotides to the ends of RNA molecules by using nucleoside diphosphates as substrates, but this may not be physiologically important. Probably plays a role in initiation of 16S rRNA degradation (leading to ribosome degradation) during starvation. The protein is Ribonuclease PH of Sphingopyxis alaskensis (strain DSM 13593 / LMG 18877 / RB2256) (Sphingomonas alaskensis).